Reading from the N-terminus, the 219-residue chain is 7-carboxy-7-deazaguanine synthase (219 aa).

Residues 22 to 24 (IQG) and Arg-37 each bind substrate. The Radical SAM core domain occupies 28–219 (LVGLPSVFIR…PQVHKCFDLK (192 aa)). Cys-41, Cys-45, and Cys-48 together coordinate [4Fe-4S] cluster. Thr-81 is a substrate binding site. S-adenosyl-L-methionine-binding positions include Gly-83 and 130 to 132 (SPK).

It belongs to the radical SAM superfamily. 7-carboxy-7-deazaguanine synthase family. Homodimer. [4Fe-4S] cluster serves as cofactor. It depends on S-adenosyl-L-methionine as a cofactor. The cofactor is Mg(2+).

It catalyses the reaction 6-carboxy-5,6,7,8-tetrahydropterin + H(+) = 7-carboxy-7-deazaguanine + NH4(+). It functions in the pathway purine metabolism; 7-cyano-7-deazaguanine biosynthesis. Functionally, catalyzes the complex heterocyclic radical-mediated conversion of 6-carboxy-5,6,7,8-tetrahydropterin (CPH4) to 7-carboxy-7-deazaguanine (CDG), a step common to the biosynthetic pathways of all 7-deazapurine-containing compounds. The sequence is that of 7-carboxy-7-deazaguanine synthase from Aquifex aeolicus (strain VF5).